The sequence spans 20 residues: Toxin TpF21-Cocle (20 aa).

Residues 1-20 enclose the LCN-type CS-alpha/beta domain; that stretch reads KDGYLVGNDGCKYSCNTYPK.

Belongs to the long (4 C-C) scorpion toxin superfamily. Sodium channel inhibitor family. Beta subfamily. In terms of tissue distribution, expressed by the venom gland.

The protein resides in the secreted. Its function is as follows. Beta toxins bind voltage-independently at site-4 of sodium channels (Nav) and shift the voltage of activation toward more negative potentials thereby affecting sodium channel activation and promoting spontaneous and repetitive firing. In Tityus pachyurus (Colombian scorpion), this protein is Toxin TpF21-Cocle.